A 129-amino-acid polypeptide reads, in one-letter code: L5 homolog (129 aa).

The helical; Signal-anchor for type III membrane protein transmembrane segment at 27–47 (YFYILVFEVIVALIILNFFFK) threads the bilayer. A disulfide bridge links C76 with C106.

The protein belongs to the chordopoxvirinae L5 family. As to quaternary structure, part of a stable entry-fusion complex (EFC) which is at least composed of proteins A16, A21, A28, G3, G9, H2, J5, and L5. Formation of the viral membrane is necessary for the assembly of the complex. Interacts with G3. Most cysteines are linked by disulfide bonds. They are created by the viral disulfide bond formation pathway, a poxvirus-specific redox pathway that operates on the cytoplasmic side of the MV membranes.

It is found in the virion membrane. Envelope protein part of the entry-fusion complex responsible for the virus membrane fusion with host cell membrane during virus entry. Also plays a role in cell-cell fusion (syncytium formation). This Fowlpox virus (strain NVSL) (FPV) protein is L5 homolog.